An 840-amino-acid polypeptide reads, in one-letter code: Serotype-specific mannosyltransferase WbdA (840 aa).

Positions 2–399 (HILIDVQGYQ…WANTAHLAIE (398 aa)) are alpha-(1-&gt;2)-mannosyltransferase. Positions 456–829 (KLLVDISVLA…WKQSAEFLLK (374 aa)) are alpha-(1-&gt;3)-mannosyltransferase.

It belongs to the glycosyltransferase group 1 family. Glycosyltransferase 4 subfamily. In terms of assembly, monomer. Interacts with the C-terminal region of WbdD. Interacts with WbdD via a surface-exposed alpha-helix in the C-terminal mannosyltransferase domain. However, the C-terminal domain is unable to interact with WbdD in the absence of its N-terminal partner.

The protein localises to the cell inner membrane. The enzyme catalyses [alpha-D-Man-(1-&gt;3)-alpha-D-Man-(1-&gt;3)-alpha-D-Man-(1-&gt;2)-alpha-D-Man-(1-&gt;2)](n)-alpha-D-Man-(1-&gt;3)-alpha-D-Man-(1-&gt;3)-alpha-D-Man-(1-&gt;3)-alpha-D-GlcNAc-di-trans,octa-cis-undecaprenyl diphosphate + 2 GDP-alpha-D-mannose = alpha-D-Man-(1-&gt;2)-alpha-D-Man-(1-&gt;2)-[alpha-D-Man-(1-&gt;3)-alpha-D-Man-(1-&gt;3)-alpha-D-Man-(1-&gt;2)-alpha-D-Man-(1-&gt;2)](n)-alpha-D-Man-(1-&gt;3)-alpha-D-Man-(1-&gt;3)-alpha-D-Man-(1-&gt;3)-alpha-D-GlcNAc-di-trans,octa-cis-undecaprenyl diphosphate + 2 GDP + 2 H(+). The catalysed reaction is alpha-D-Man-(1-&gt;2)-alpha-D-Man-(1-&gt;2)-[alpha-D-Man-(1-&gt;3)-alpha-D-Man-(1-&gt;3)-alpha-D-Man-(1-&gt;2)-alpha-D-Man-(1-&gt;2)](n)-alpha-D-Man-(1-&gt;3)-alpha-D-Man-(1-&gt;3)-alpha-D-Man-(1-&gt;3)-alpha-D-GlcNAc-di-trans,octa-cis-undecaprenyl diphosphate + 2 GDP-alpha-D-mannose = [alpha-D-Man-(1-&gt;3)-alpha-D-Man-(1-&gt;3)-alpha-D-Man-(1-&gt;2)-alpha-D-Man-(1-&gt;2)](n+1)-alpha-D-Man-(1-&gt;3)-alpha-D-Man-(1-&gt;3)-alpha-D-Man-(1-&gt;3)-alpha-D-GlcNAc-di-trans,octa-cis-undecaprenyl diphosphate + 2 GDP + 2 H(+). Its pathway is bacterial outer membrane biogenesis; LPS O-antigen biosynthesis. Its activity is regulated as follows. The alpha-(1-&gt;2)-mannosyltransferase activity of the N-terminal domain is regulated by the activity of the C-terminal alpha-(1-&gt;3)-mannosyltransferase. The relative concentration of WbdA and WbdD is critical in determining the O polysaccharide (OPS) modal chain length. OPS chain length increases with increasing concentration of WbdA, but the maximum length does not increase beyond the wild-type modal length, despite substantial increases in WbdA concentration. In terms of biological role, mannosyltransferase involved in the biosynthesis of the repeat unit of the lipopolysaccharide (LPS) O-antigen region. Catalyzes the polymerization of a tetrasaccharide repeat unit containing two alpha-(1-&gt;3)- and two alpha-(1-&gt;2)-linked mannopyranose residues. Extension is terminated by the action of the chain terminator bifunctional methyltransferase/kinase WbdD. This Escherichia coli protein is Serotype-specific mannosyltransferase WbdA.